The chain runs to 131 residues: Small ribosomal subunit protein uS8 (131 aa).

The protein belongs to the universal ribosomal protein uS8 family. As to quaternary structure, part of the 30S ribosomal subunit. Contacts proteins S5 and S12.

In terms of biological role, one of the primary rRNA binding proteins, it binds directly to 16S rRNA central domain where it helps coordinate assembly of the platform of the 30S subunit. This chain is Small ribosomal subunit protein uS8, found in Porphyromonas gingivalis (strain ATCC 33277 / DSM 20709 / CIP 103683 / JCM 12257 / NCTC 11834 / 2561).